A 658-amino-acid polypeptide reads, in one-letter code: Threonine--tRNA ligase (658 aa).

Residues 1–64 (MSNTVSLQFP…GASGKVEIIT (64 aa)) enclose the TGS domain. Residues 246–548 (DHRRLGREMD…LIENFAGHMP (303 aa)) form a catalytic region. 3 residues coordinate Zn(2+): Cys343, His394, and His525.

This sequence belongs to the class-II aminoacyl-tRNA synthetase family. In terms of assembly, homodimer. Zn(2+) is required as a cofactor.

It localises to the cytoplasm. It carries out the reaction tRNA(Thr) + L-threonine + ATP = L-threonyl-tRNA(Thr) + AMP + diphosphate + H(+). Catalyzes the attachment of threonine to tRNA(Thr) in a two-step reaction: L-threonine is first activated by ATP to form Thr-AMP and then transferred to the acceptor end of tRNA(Thr). Also edits incorrectly charged L-seryl-tRNA(Thr). This Brucella melitensis biotype 2 (strain ATCC 23457) protein is Threonine--tRNA ligase.